A 562-amino-acid polypeptide reads, in one-letter code: Laccase-2 (562 aa).

A signal peptide spans 1–26 (MASAASSLPLLVSSLLLALFALGAHA). 2 Plastocyanin-like domains span residues 34-150 (DIVM…PAAG) and 160-312 (DEAE…YAGV). Residues N39, N53, N72, and N80 are each glycosylated (N-linked (GlcNAc...) asparagine). Positions 84 and 86 each coordinate Cu cation. A glycan (N-linked (GlcNAc...) asparagine) is linked at N118. Residues H129 and H131 each contribute to the Cu cation site. Residues N189, N244, N300, N328, N376, N386, N421, and N445 are each glycosylated (N-linked (GlcNAc...) asparagine). The Plastocyanin-like 3 domain maps to 411–546 (DFPDRPPARF…KMAFLVEDGS (136 aa)). Cu cation contacts are provided by H463, H466, H468, H525, C526, H527, and H531.

The protein belongs to the multicopper oxidase family. The cofactor is Cu cation.

Its subcellular location is the secreted. The protein localises to the extracellular space. It is found in the apoplast. The catalysed reaction is 4 hydroquinone + O2 = 4 benzosemiquinone + 2 H2O. Its function is as follows. Lignin degradation and detoxification of lignin-derived products. This is Laccase-2 (LAC2) from Oryza sativa subsp. japonica (Rice).